A 1204-amino-acid polypeptide reads, in one-letter code: TPR repeat-containing protein DDB_G0287999 (1204 aa).

Residues 32 to 48 are compositionally biased toward low complexity; sequence TTDTTTTTSTSTTTDTD. Residues 32-55 form a disordered region; the sequence is TTDTTTTTSTSTTTDTDTNSEKSN. TPR repeat units lie at residues 263-296, 379-412, and 583-617; these read SKGLLLMIEFYIKIGDIDSAFKFFEVNFKDYKDL, NDSNNIIKNSSSKLEFNDDCVSNYKKLVNFDQLY, and IQHFVETALIYLINDNSYQEAVKLYIYFLKEGSVT. The segment at 360–387 is disordered; that stretch reads QPPPQEQQLMDDDSNSNSNNDSNNIIKN. Positions 374-387 are enriched in low complexity; sequence NSNSNNDSNNIIKN. Disordered regions lie at residues 639–660 and 761–797; these read NNNNNNNNNNNNNNNNNNNNNN and DDNDNDNNNNNNNNNNNNNDDDDGGGHGGGDVFKTTT. Over residues 766–778 the composition is skewed to low complexity; that stretch reads DNNNNNNNNNNNN.

The polypeptide is TPR repeat-containing protein DDB_G0287999 (Dictyostelium discoideum (Social amoeba)).